We begin with the raw amino-acid sequence, 363 residues long: Adenosine deaminase (363 aa).

The residue at position 2 (Ala2) is an N-acetylalanine. Residues His15 and His17 each coordinate Zn(2+). Substrate contacts are provided by His17 and Asp19. At Lys54 the chain carries N6-acetyllysine. Gly184 provides a ligand contact to substrate. His214 is a Zn(2+) binding site. Glu217 functions as the Proton donor in the catalytic mechanism. Residue Lys232 is modified to N6-acetyllysine. Asp295 serves as a coordination point for Zn(2+). Asp296 serves as a coordination point for substrate.

This sequence belongs to the metallo-dependent hydrolases superfamily. Adenosine and AMP deaminases family. Interacts with DPP4 (via extracellular domain). Interacts with PLG (via Kringle 4 domain); the interaction stimulates PLG activation when in complex with DPP4. The cofactor is Zn(2+). Expressed in gastrointestinal tissues (at protein level).

The protein resides in the cell membrane. It localises to the cell junction. Its subcellular location is the cytoplasmic vesicle lumen. The protein localises to the cytoplasm. It is found in the lysosome. The catalysed reaction is adenosine + H2O + H(+) = inosine + NH4(+). It carries out the reaction 2'-deoxyadenosine + H2O + H(+) = 2'-deoxyinosine + NH4(+). It catalyses the reaction cordycepin + H2O + H(+) = 3'-deoxyinosine + NH4(+). Catalyzes the hydrolytic deamination of adenosine and 2-deoxyadenosine. Plays an important role in purine metabolism and in adenosine homeostasis. Modulates signaling by extracellular adenosine, and so contributes indirectly to cellular signaling events. Acts as a positive regulator of T-cell coactivation, by binding DPP4. Its interaction with DPP4 regulates lymphocyte-epithelial cell adhesion. Enhances dendritic cell immunogenicity by affecting dendritic cell costimulatory molecule expression and cytokines and chemokines secretion. Enhances CD4+ T-cell differentiation and proliferation. Acts as a positive modulator of adenosine receptors ADORA1 and ADORA2A, by enhancing their ligand affinity via conformational change. Stimulates plasminogen activation. Plays a role in male fertility. Plays a protective role in early postimplantation embryonic development. Also responsible for the deamination of cordycepin (3'-deoxyadenosine), a fungal natural product that shows antitumor, antibacterial, antifungal, antivirus, and immune regulation properties. The polypeptide is Adenosine deaminase (ADA) (Bos taurus (Bovine)).